Here is a 379-residue protein sequence, read N- to C-terminus: Ascochitine biosynthesis cluster protein 8 (379 aa).

3 helical membrane passes run 87 to 107 (ELIA…LDLE), 116 to 136 (VGPV…VAAC), and 141 to 161 (IKVF…VVAL).

The protein localises to the membrane. It participates in mycotoxin biosynthesis. Functionally, part of the gene cluster that mediates the biosynthesis of the selective antifungal agent ascochitine, an o-quinone methide that plays a possible protective role against other microbial competitors in nature and is considered to be important for pathogenicity of legume-associated Didymella species. The pathway probably begins with the synthesis of a keto-aldehyde intermediate by the ascochitine non-reducing polyketide synthase pksAC from successive condensations of 4 malonyl-CoA units, presumably with a simple acetyl-CoA starter unit. Release of the keto-aldehyde intermediate is consistent with the presence of the C-terminal reductive release domain. The HR-PKS (orf7) probably makes a diketide starter unit which is passed to the non-reducing polyketide synthase pksAC for further extension, producing ascochital and ascochitine. The aldehyde dehydrogenase (orf1), the 2-oxoglutarate-dependent dioxygenase (orf3) and the dehydrogenase (orf9) are probably involved in subsequent oxidations of methyl groups to the carboxylic acid of the heterocyclic ring. The ascochitine gene cluster also includes a gene encoding a short peptide with a cupin domain (orf2) that is often found in secondary metabolite gene clusters and which function has still to be determined. This is Ascochitine biosynthesis cluster protein 8 from Didymella fabae (Leaf and pod spot disease fungus).